The primary structure comprises 136 residues: Large ribosomal subunit protein bL21 (136 aa).

The segment covering 1–21 (MSETPSKAKASKPAESKAQAS) has biased composition (low complexity). The interval 1-25 (MSETPSKAKASKPAESKAQASDSSG) is disordered.

This sequence belongs to the bacterial ribosomal protein bL21 family. As to quaternary structure, part of the 50S ribosomal subunit. Contacts protein L20.

This protein binds to 23S rRNA in the presence of protein L20. This Synechococcus sp. (strain RCC307) protein is Large ribosomal subunit protein bL21.